The primary structure comprises 470 residues: Crh-like protein UTR2 (470 aa).

An N-terminal signal peptide occupies residues 1–23; the sequence is MRFSTLHFAFLATLSSIFTVVAA. The cysteines at positions 58 and 69 are disulfide-linked. N-linked (GlcNAc...) asparagine glycans are attached at residues Asn-65, Asn-100, and Asn-125. A GH16 domain is found at 95 to 282; the sequence is SDYLGNSTEA…WAGGLINWDS (188 aa). Glu-168 (nucleophile) is an active-site residue. Glu-172 acts as the Proton donor in catalysis. A chitin-binding site is contributed by Glu-172. Asn-177, Asn-194, Asn-198, Asn-202, Asn-235, and Asn-239 each carry an N-linked (GlcNAc...) asparagine glycan. Trp-259 and Thr-270 together coordinate chitin. N-linked (GlcNAc...) asparagine glycans are attached at residues Asn-314 and Asn-327. Positions 347–446 are disordered; that stretch reads SDDATGFDPQ…SSGSSSQGVA (100 aa). Low complexity-rich tracts occupy residues 370-384 and 392-408; these read TTIT…ITSV and TANV…QATA. The span at 409-418 shows a compositional bias: polar residues; the sequence is KSSTGTNTYD. The segment covering 433 to 446 has biased composition (low complexity); sequence TDSGSSGSSSQGVA. Ser-440 carries GPI-anchor amidated serine lipidation. Positions 441–470 are cleaved as a propeptide — removed in mature form; that stretch reads SSQGVANSLNESVISGIFASICLGILSFFM. N-linked (GlcNAc...) asparagine glycosylation is present at Asn-450.

Belongs to the glycosyl hydrolase 16 family. CRH1 subfamily. The GPI-anchor is attached to the protein in the endoplasmic reticulum and serves to target the protein to the cell surface. There, the glucosamine-inositol phospholipid moiety is cleaved off and the GPI-modified mannoprotein is covalently attached via its lipidless GPI glycan remnant to the 1,6-beta-glucan of the outer cell wall layer.

It localises to the secreted. Its subcellular location is the cell wall. It is found in the membrane. The enzyme catalyses Random endo-hydrolysis of N-acetyl-beta-D-glucosaminide (1-&gt;4)-beta-linkages in chitin and chitodextrins.. Functionally, dual chitinase/transglycosylase that plays a role in cell wall architecture. Chitinase and transglycosylase activities are coupled. Required for the polysaccharide cross-linking at the septa and the cell wall. More specifically, transfers chitin to 1,6-beta-glucan in the cell wall. Plays an important role in fungal pathogenesis via its functions in cell wall assembly and regeneration, filamentation, and adherence to host cells. Acts as a cell surface antigen in acute candidemia patients. The chain is Crh-like protein UTR2 from Candida albicans (strain SC5314 / ATCC MYA-2876) (Yeast).